Here is a 447-residue protein sequence, read N- to C-terminus: Tubulin beta chain (447 aa).

GTP contacts are provided by Gln-11, Glu-69, Ser-138, Gly-142, Thr-143, Gly-144, Asn-204, and Asn-226. Glu-69 contributes to the Mg(2+) binding site. The segment at 424 to 447 is disordered; that stretch reads QYQDASISEGEEDYEEEPQVENEE. Residues 432 to 447 show a composition bias toward acidic residues; sequence EGEEDYEEEPQVENEE.

This sequence belongs to the tubulin family. As to quaternary structure, dimer of alpha and beta chains. A typical microtubule is a hollow water-filled tube with an outer diameter of 25 nm and an inner diameter of 15 nM. Alpha-beta heterodimers associate head-to-tail to form protofilaments running lengthwise along the microtubule wall with the beta-tubulin subunit facing the microtubule plus end conferring a structural polarity. Microtubules usually have 13 protofilaments but different protofilament numbers can be found in some organisms and specialized cells. The cofactor is Mg(2+).

The protein resides in the cytoplasm. The protein localises to the cytoskeleton. Tubulin is the major constituent of microtubules, a cylinder consisting of laterally associated linear protofilaments composed of alpha- and beta-tubulin heterodimers. Microtubules grow by the addition of GTP-tubulin dimers to the microtubule end, where a stabilizing cap forms. Below the cap, tubulin dimers are in GDP-bound state, owing to GTPase activity of alpha-tubulin. This Uncinula necator (Grape powdery mildew) protein is Tubulin beta chain.